The primary structure comprises 113 residues: Large ribosomal subunit protein bL19 (113 aa).

This sequence belongs to the bacterial ribosomal protein bL19 family.

Its function is as follows. This protein is located at the 30S-50S ribosomal subunit interface and may play a role in the structure and function of the aminoacyl-tRNA binding site. This chain is Large ribosomal subunit protein bL19, found in Moorella thermoacetica (strain ATCC 39073 / JCM 9320).